A 568-amino-acid chain; its full sequence is U6 small nuclear RNA (adenine-(43)-N(6))-methyltransferase (568 aa).

The segment at 1–20 is disordered; sequence MSEIDTNDIKKEMDNKNYRD. The segment covering 7–20 has biased composition (basic and acidic residues); it reads NDIKKEMDNKNYRD. Arginine 117, glycine 151, aspartate 175, and asparagine 250 together coordinate S-adenosyl-L-methionine. Disordered stretches follow at residues 363–383, 403–431, and 503–538; these read KENN…INNN, NLDS…NNNN, and DPKI…NKNN. 3 stretches are compositionally biased toward low complexity: residues 365-383, 409-431, and 507-538; these read NNNI…INNN, NNNN…NNNN, and NNNN…NKNN.

The protein belongs to the methyltransferase superfamily. METTL16/RlmF family.

It catalyses the reaction adenosine in U6 snRNA + S-adenosyl-L-methionine = N(6)-methyladenosine in U6 snRNA + S-adenosyl-L-homocysteine + H(+). Its function is as follows. RNA N6-methyltransferase that mediates N6-methylation of adenine of U6 small nuclear RNA (U6 snRNA). The sequence is that of U6 small nuclear RNA (adenine-(43)-N(6))-methyltransferase from Dictyostelium discoideum (Social amoeba).